The following is a 409-amino-acid chain: AP-1-like transcription factor YAP2 (409 aa).

2 consecutive short sequence motifs (bipartite nuclear localization signal) follow at residues M17–N24 and S47–R54. Residues D26–K64 form a disordered region. Residues S43–Y106 enclose the bZIP domain. The interval K46–K69 is basic motif. The interval L71 to L99 is leucine-zipper. The segment at Q127 to T156 is disordered. A c-CRD region spans residues C356 to C387. The short motif at L372–S379 is the Nuclear export signal element.

This sequence belongs to the bZIP family. YAP subfamily. In terms of assembly, homodimer; disulfide-linked, upon oxidation. Interacts in the nucleus with the nuclear export protein CRM1. Interacts with RCK1. In terms of processing, depending on the oxidative stress inducing agent, CAD1/YAP2 can undergo two distinct conformational changes, both through oxidation of cysteine residues, and both masking the nuclear export signal, thus abolishing nuclear export by CRM1/exportin 1. Peroxide stress induces the formation of possible intramolecular disulfide bonds as well as intermolcular disulfide within a homodimer. Cadmium may bind directly to specific cysteine residues (Cys-391 and either Cys-356 or Cys-387) in the c-CRD.

It is found in the cytoplasm. The protein localises to the nucleus. Functionally, transcription activator involved in oxidative stress response and cadmium resistance. Regulates the transcription of genes overrepresented for the function of stabilizing proteins including the inducible Hsp90-family protein HSP82. Preferentially binds to promoters with the core binding site 5'-TTA[CG]TAA-3'. Activity of the transcription factor is controlled through oxidation of specific cysteine residues resulting in the alteration of its subcellular location. Activation by alkyl hydroperoxides or cadmium induces nuclear accumulation and as a result CAD1/YAP2 transcriptional activity. In Saccharomyces cerevisiae (strain ATCC 204508 / S288c) (Baker's yeast), this protein is AP-1-like transcription factor YAP2.